Here is a 349-residue protein sequence, read N- to C-terminus: Bifunctional nitrilase/nitrile hydratase NIT4A (349 aa).

In terms of domain architecture, CN hydrolase spans 29–301; sequence VRATVVQAST…EALISADLDL (273 aa). Glu-69 (proton acceptor) is an active-site residue. Residue Lys-156 is the Proton donor of the active site. Cys-190 serves as the catalytic Nucleophile.

This sequence belongs to the carbon-nitrogen hydrolase superfamily. Nitrilase family. As to expression, expressed in roots, stems, cotyledons, leaves and flowers.

The protein resides in the cell membrane. The catalysed reaction is a nitrile + 2 H2O = a carboxylate + NH4(+). The enzyme catalyses 3-cyano-L-alanine + 2 H2O = L-aspartate + NH4(+). It catalyses the reaction L-asparagine = 3-cyano-L-alanine + H2O. Functionally, highly specific for beta-cyano-L-alanine (Ala(CN)). Low activity with 3-phenylpropionitrile (PPN). Not associated with auxin production but may be involved in cyanide detoxification. In Nicotiana tabacum (Common tobacco), this protein is Bifunctional nitrilase/nitrile hydratase NIT4A (NIT4A).